The sequence spans 340 residues: Entry-fusion complex protein OPG094 (340 aa).

Positions 1–20 (MGGGVSVELPKRDPPPGVPT) are disordered. Gly-2 is lipidated: N-myristoyl glycine; by host. At 2–319 (GGGVSVELPK…VQHNIKHSFD (318 aa)) the chain is on the virion surface side. The helical; Signal-anchor for type II membrane protein transmembrane segment at 320 to 340 (LKLHLISLLSLLVIWILIVAI) threads the bilayer.

It belongs to the orthopoxvirus OPG086 family. In terms of assembly, interacts with OPG143. Component of the entry fusion complex (EFC) composed of OPG053, OPG076, OPG086, OPG094, OPG095, OPG099, OPG107, OPG143, OPG104, OPG147 and OPG155. Except for OPG095 and OPG053, each of the EFC proteins is required for assembly or stability of the complex. Post-translationally, unglycosylated because produced in viral factories instead of the classic ER -Golgi route.

Its subcellular location is the virion membrane. Functionally, component of the entry fusion complex (EFC), which consists of 11 proteins. During cell infection, this complex mediates entry of the virion core into the host cytoplasm by a two-step mechanism consisting of lipid mixing of the viral and cellular membranes and subsequent pore formation. This chain is Entry-fusion complex protein OPG094 (OPG094), found in Homo sapiens (Human).